The following is a 236-amino-acid chain: Bacterial rhodopsin CSR3 (236 aa).

At 1–3 (MDA) the chain is on the extracellular side. Residues 4-25 (VAVVYGITAAGFAVGVAIVGYL) traverse the membrane as a helical segment. Residues 26–34 (YASLEGSEE) lie on the Cytoplasmic side of the membrane. Residues 35-56 (RSILAALALIPGFAGISYVAMA) traverse the membrane as a helical segment. The Extracellular portion of the chain corresponds to 57–70 (FGIGTVTIGETTLV). The chain crosses the membrane as a helical span at residues 71 to 92 (GFRYLDWVVTTPLLVGFVGYAA). The Cytoplasmic portion of the chain corresponds to 93-95 (GAS). The chain crosses the membrane as a helical span at residues 96-118 (RRAIFGVMVADALMILTGVGAVV). Residues 119-122 (ADGT) are Extracellular-facing. The helical transmembrane segment at 123–150 (LKWVLFGVSTVFHVSLFAYLYLVFPRSV) threads the bilayer. Residues 151-153 (PDD) are Cytoplasmic-facing. The chain crosses the membrane as a helical span at residues 154–181 (PQRIGLFSLLKNHIGLLWIAYPLVWLAG). Over 182 to 189 (PEGLGLAT) the chain is Extracellular. The helical transmembrane segment at 190-222 (YVGVSITYAFLDLLAKVPYVYFFYARRQVFATK) threads the bilayer. The residue at position 205 (K205) is an N6-(retinylidene)lysine. Over 223 to 236 (LLRDSGEVTATPAD) the chain is Cytoplasmic.

Belongs to the archaeal/bacterial/fungal opsin family.

The protein localises to the cell membrane. The polypeptide is Bacterial rhodopsin CSR3 (Haloarcula vallismortis (Halobacterium vallismortis)).